The chain runs to 114 residues: Large ribosomal subunit protein bL20c (114 aa).

Belongs to the bacterial ribosomal protein bL20 family.

It localises to the plastid. Functionally, binds directly to 23S ribosomal RNA and is necessary for the in vitro assembly process of the 50S ribosomal subunit. It is not involved in the protein synthesizing functions of that subunit. The sequence is that of Large ribosomal subunit protein bL20c from Prototheca wickerhamii.